The chain runs to 521 residues: Tetratricopeptide repeat and J domain-containing co-chaperone DNJ1 (521 aa).

Positions 1–21 (MHLNLAGLAVAATAFLATASA) are cleaved as a signal peptide. TPR repeat units follow at residues 33 to 66 (VSNL…DPTN), 67 to 100 (YLSL…KPGF), 102 to 134 (GAHL…PKSA), 176 to 209 (PHLR…KPGD), 211 to 244 (SPHI…DPDS), 315 to 348 (LENL…NPDS), and 349 to 382 (FWGL…RPDQ). Residues 404 to 473 (DYYKVLGVEN…ELRARFDRGD (70 aa)) enclose the J domain. Positions 464–474 (ELRARFDRGDD) are enriched in basic and acidic residues. Positions 464–521 (ELRARFDRGDDPNSQERPNPFQGQGNPFGGGHPFMFQQGGGGGGPNIKFQFGGQPFGF) are disordered. Residues 489 to 508 (NPFGGGHPFMFQQGGGGGGP) show a composition bias toward gly residues. Residues 509 to 521 (NIKFQFGGQPFGF) are compositionally biased toward low complexity.

The protein resides in the endoplasmic reticulum lumen. Its function is as follows. Endoplasmic reticulum co-chaperone required for the of virulence factors such as PG1, the major endopolygalacturonase produced during the infection of tomato plants. This Fusarium oxysporum f. sp. lycopersici (strain 4287 / CBS 123668 / FGSC 9935 / NRRL 34936) (Fusarium vascular wilt of tomato) protein is Tetratricopeptide repeat and J domain-containing co-chaperone DNJ1.